The sequence spans 526 residues: O-phosphoserine--tRNA(Cys) ligase (526 aa).

Residues 189–191 (HMT), 234–236 (SAS), 276–277 (YY), and Asn-319 each bind substrate.

It belongs to the class-II aminoacyl-tRNA synthetase family. O-phosphoseryl-tRNA(Cys) synthetase subfamily. Homotetramer. Interacts with SepCysS.

It catalyses the reaction tRNA(Cys) + O-phospho-L-serine + ATP = O-phospho-L-seryl-tRNA(Cys) + AMP + diphosphate. Catalyzes the attachment of O-phosphoserine (Sep) to tRNA(Cys). This chain is O-phosphoserine--tRNA(Cys) ligase, found in Methanocorpusculum labreanum (strain ATCC 43576 / DSM 4855 / Z).